A 77-amino-acid chain; its full sequence is EMBRYO SURROUNDING FACTOR 1-like protein 6 (77 aa).

Positions 1–25 are cleaved as a signal peptide; sequence MSPSHFAILFIIVISLVPLHGYANG. Cystine bridges form between cysteine 38–cysteine 53, cysteine 43–cysteine 72, cysteine 51–cysteine 68, and cysteine 54–cysteine 61.

Belongs to the MEG family.

The sequence is that of EMBRYO SURROUNDING FACTOR 1-like protein 6 (ESFL6) from Arabidopsis thaliana (Mouse-ear cress).